Consider the following 218-residue polypeptide: Hypoxanthine-guanine phosphoribosyltransferase (218 aa).

Alanine 2 carries the N-acetylalanine modification. Residue lysine 69 participates in GMP binding. Position 103 is an N6-acetyllysine (lysine 103). Lysine 115 participates in a covalent cross-link: Glycyl lysine isopeptide (Lys-Gly) (interchain with G-Cter in SUMO1); alternate. Residue lysine 115 forms a Glycyl lysine isopeptide (Lys-Gly) (interchain with G-Cter in SUMO2); alternate linkage. Residues 134-142 (EDIIDTGKT), lysine 166, 186-188 (KFV), and aspartate 194 each bind GMP. Aspartate 138 serves as the catalytic Proton acceptor. A Phosphothreonine modification is found at threonine 142. Aspartate 194 is a Mg(2+) binding site.

This sequence belongs to the purine/pyrimidine phosphoribosyltransferase family. In terms of assembly, homotetramer. Mg(2+) serves as cofactor.

Its subcellular location is the cytoplasm. The enzyme catalyses IMP + diphosphate = hypoxanthine + 5-phospho-alpha-D-ribose 1-diphosphate. It carries out the reaction GMP + diphosphate = guanine + 5-phospho-alpha-D-ribose 1-diphosphate. It participates in purine metabolism; IMP biosynthesis via salvage pathway; IMP from hypoxanthine: step 1/1. Converts guanine to guanosine monophosphate, and hypoxanthine to inosine monophosphate. Transfers the 5-phosphoribosyl group from 5-phosphoribosylpyrophosphate onto the purine. Plays a central role in the generation of purine nucleotides through the purine salvage pathway. The protein is Hypoxanthine-guanine phosphoribosyltransferase (HPRT1) of Bos taurus (Bovine).